The primary structure comprises 505 residues: Cyclin-dependent kinase C-1 (505 aa).

The Protein kinase domain occupies Phe-26–Phe-325. Residues Ile-32–Val-40 and Lys-55 each bind ATP. Tyr-37 bears the Phosphotyrosine mark. Asp-164 functions as the Proton acceptor in the catalytic mechanism. Residue Thr-198 is modified to Phosphothreonine. The disordered stretch occupies residues Ser-336 to Gln-505. Positions Pro-429–Gly-456 are enriched in low complexity. Residues Gly-482 to Gly-491 are compositionally biased toward gly residues. Over residues Arg-492–Gln-505 the composition is skewed to low complexity.

Belongs to the protein kinase superfamily. CMGC Ser/Thr protein kinase family. CDC2/CDKX subfamily. Interacts with CYCT1-3. As to expression, highly expressed in flowers. Expressed in seedlings, roots, rosettes and stems.

It carries out the reaction L-seryl-[protein] + ATP = O-phospho-L-seryl-[protein] + ADP + H(+). The catalysed reaction is L-threonyl-[protein] + ATP = O-phospho-L-threonyl-[protein] + ADP + H(+). It catalyses the reaction [DNA-directed RNA polymerase] + ATP = phospho-[DNA-directed RNA polymerase] + ADP + H(+). This is Cyclin-dependent kinase C-1 (CDKC-1) from Arabidopsis thaliana (Mouse-ear cress).